Here is a 211-residue protein sequence, read N- to C-terminus: MTKVLFITANPNSAEGSFGMAVGEAFIEAYKNEHPQDEVVTIDLFNTTVPAIDADVFAAWGKFAAGEGFEALTEVQQQKVAAMNTNLETFMNADRYVFVTPMWNFSYPPVVKAYLDNVAIAGKTFKYTENGPVGLLEGKKALHIQATGGVYSEGAYAAVDFGRNHLKTVLGFVGVNDTEYIAVEGMNANPEKAQEIKEAAIANARELAKRF.

Residue 102 to 105 (MWNF) participates in FMN binding.

This sequence belongs to the azoreductase type 1 family. As to quaternary structure, homodimer. Requires FMN as cofactor.

The enzyme catalyses 2 a quinone + NADH + H(+) = 2 a 1,4-benzosemiquinone + NAD(+). It carries out the reaction N,N-dimethyl-1,4-phenylenediamine + anthranilate + 2 NAD(+) = 2-(4-dimethylaminophenyl)diazenylbenzoate + 2 NADH + 2 H(+). Quinone reductase that provides resistance to thiol-specific stress caused by electrophilic quinones. In terms of biological role, also exhibits azoreductase activity. Catalyzes the reductive cleavage of the azo bond in aromatic azo compounds to the corresponding amines. This Bacillus cereus (strain ATCC 14579 / DSM 31 / CCUG 7414 / JCM 2152 / NBRC 15305 / NCIMB 9373 / NCTC 2599 / NRRL B-3711) protein is FMN-dependent NADH:quinone oxidoreductase 2.